Consider the following 365-residue polypeptide: Succinate--CoA ligase [ADP-forming] subunit beta (365 aa).

Positions 9 to 230 (KEIFRAEGIS…EMEEYEPEEF (222 aa)) constitute an ATP-grasp domain. ATP-binding positions include Lys45, 52–54 (GRG), Glu90, Ile93, and Glu98. Positions 190 and 203 each coordinate Mg(2+). Substrate-binding positions include Asn244 and 300–302 (GIT).

The protein belongs to the succinate/malate CoA ligase beta subunit family. As to quaternary structure, heterotetramer of two alpha and two beta subunits. The cofactor is Mg(2+).

The enzyme catalyses succinate + ATP + CoA = succinyl-CoA + ADP + phosphate. It carries out the reaction GTP + succinate + CoA = succinyl-CoA + GDP + phosphate. It functions in the pathway carbohydrate metabolism; tricarboxylic acid cycle; succinate from succinyl-CoA (ligase route): step 1/1. Succinyl-CoA synthetase functions in the citric acid cycle (TCA), coupling the hydrolysis of succinyl-CoA to the synthesis of either ATP or GTP and thus represents the only step of substrate-level phosphorylation in the TCA. The beta subunit provides nucleotide specificity of the enzyme and binds the substrate succinate, while the binding sites for coenzyme A and phosphate are found in the alpha subunit. This is Succinate--CoA ligase [ADP-forming] subunit beta from Methanothermobacter thermautotrophicus (strain ATCC 29096 / DSM 1053 / JCM 10044 / NBRC 100330 / Delta H) (Methanobacterium thermoautotrophicum).